A 166-amino-acid polypeptide reads, in one-letter code: 3-hydroxyacyl-[acyl-carrier-protein] dehydratase, mitochondrial (166 aa).

A mitochondrion-targeting transit peptide spans 1 to 17; the sequence is MLAKTVFPRGLLVLRSF. The region spanning 34 to 125 is the MaoC-like domain; the sequence is ETRVFSSEDI…VQAIALRETK (92 aa).

Homodimer. Expressed in leaves, roots, siliques and flowers.

It localises to the mitochondrion. It carries out the reaction a (3R)-hydroxyacyl-[ACP] = a (2E)-enoyl-[ACP] + H2O. It catalyses the reaction (3R)-hydroxyhexadecanoyl-[ACP] = (2E)-hexadecenoyl-[ACP] + H2O. The enzyme catalyses (3R)-hydroxydecanoyl-[ACP] = (2E)-decenoyl-[ACP] + H2O. Its pathway is lipid metabolism; fatty acid biosynthesis. 3-hydroxyl-[acyl-carrier-protein] (3-hydroxyl-ACP) dehydratase required for mitochondrial fatty acid synthesis (mtFAS). MtFAS are essential for photorespiration and plant development, probably by influencing mitochondrial membrane lipid composition and other lipid metabolic pathways. In Arabidopsis thaliana (Mouse-ear cress), this protein is 3-hydroxyacyl-[acyl-carrier-protein] dehydratase, mitochondrial.